The chain runs to 341 residues: NADH-ubiquinone oxidoreductase chain 2 (341 aa).

Transmembrane regions (helical) follow at residues 8-28 (IFFI…SWLG), 61-81 (FLTQ…MMMF), 95-117 (LLIL…FPGV), 145-165 (LNIN…ALGG), 195-215 (LLWL…ILMF), 238-258 (FFMF…GFLP), 266-286 (LVEM…LITL), and 320-340 (ILTM…IYLI).

Belongs to the complex I subunit 2 family.

The protein localises to the mitochondrion inner membrane. It catalyses the reaction a ubiquinone + NADH + 5 H(+)(in) = a ubiquinol + NAD(+) + 4 H(+)(out). Core subunit of the mitochondrial membrane respiratory chain NADH dehydrogenase (Complex I) that is believed to belong to the minimal assembly required for catalysis. Complex I functions in the transfer of electrons from NADH to the respiratory chain. The immediate electron acceptor for the enzyme is believed to be ubiquinone. The protein is NADH-ubiquinone oxidoreductase chain 2 of Aedes aegypti (Yellowfever mosquito).